The sequence spans 277 residues: Raffinose operon transcriptional regulatory protein RafR (277 aa).

One can recognise an HTH araC/xylS-type domain in the interval asparagine 176 to serine 274. 2 DNA-binding regions (H-T-H motif) span residues methionine 193–alanine 214 and valine 241–serine 264.

Functionally, involved in the regulation of the raffinose-operon. This Pediococcus pentosaceus protein is Raffinose operon transcriptional regulatory protein RafR (rafR).